A 112-amino-acid polypeptide reads, in one-letter code: Cytochrome c-551 (112 aa).

An N-terminal signal peptide occupies residues M1 to A20. C21 carries the N-palmitoyl cysteine lipid modification. C21 is lipidated: S-diacylglycerol cysteine. Over residues D25–S35 the composition is skewed to basic and acidic residues. Positions D25 to G44 are disordered. The Cytochrome c domain occupies A39–K112. Heme c is bound by residues C52, C55, H56, and M91.

In terms of processing, binds 1 heme c group covalently per subunit.

It localises to the cell membrane. In terms of biological role, electron carrier protein. The chain is Cytochrome c-551 (cccB) from Bacillus subtilis (strain 168).